Reading from the N-terminus, the 89-residue chain is Small ribosomal subunit protein uS17 (89 aa).

Belongs to the universal ribosomal protein uS17 family. In terms of assembly, part of the 30S ribosomal subunit.

Its function is as follows. One of the primary rRNA binding proteins, it binds specifically to the 5'-end of 16S ribosomal RNA. This chain is Small ribosomal subunit protein uS17, found in Chlorobium phaeobacteroides (strain BS1).